Consider the following 485-residue polypeptide: Vacuolar fusion protein CCZ1 homolog (485 aa).

The protein belongs to the CCZ1 family. In terms of assembly, component of the Mon1-Ccz1 guanyl-nucleotide exchange factor complex made up of Mon1, Ccz1 and Bulli; the interaction of Bulli with the Mon1-Ccz1 heterodimer is mediated via the C-terminal Mic1 domain of Bulli. Mon1 and Ccz1 form a stable complex which displays Rab7 GEF activity with or without Bulli; GEF activity is enhanced by Bulli possibly by improving membrane association of the complex. Interacts with Rab5 and Rab7; preferentially binds GTP-bound Rab5 and GDP-bound Rab7.

The protein localises to the cytoplasm. The protein resides in the cytosol. Its activity is regulated as follows. The Rab7 guanyl-nucleotide exchange factor (GEF) activity of the Mon1-Ccz1 complex is autoinhibited by the N-terminal disordered region of Mon1. GEF activity is stimulated by Rab5-mediated recruitment to membranes. In terms of biological role, part of the Mon1-Ccz1 guanyl-nucleotide exchange factor complex specific for Rab7 that promotes the exchange of GDP to GTP, converting Rab7 from an inactive GDP-bound form into an active GTP-bound form. Required for recruitment of Rab7 to endosomal and autophagosomal membranes to mediate endolysosomal and autolysosomal vesicle maturation. Required for fusion of multivesicular bodies and lysosomes but not their formation or trafficking. Involved in the replacement of Rab5 (and possibly Rab4) with Rab7, also known as Rab conversion or the Rab cascade, during endosomal maturation. The Mon1-Ccz1 complex is recruited to phosphatidylinositol 3-phosphate (PtdIns[3]P) enriched membranes by Rab5, which stimulates recruitment and guanyl-nucleotide exchange of Rab7. Together with Rab7 required for autolysosome formation in fat cells and autophagic degradation during starvation-induced basal and developmental autophagy. The protein is Vacuolar fusion protein CCZ1 homolog of Drosophila melanogaster (Fruit fly).